Here is a 137-residue protein sequence, read N- to C-terminus: Hydrogenase maturation factor HypA (137 aa).

Position 2 (His2) interacts with Ni(2+). Positions 73, 75, 105, and 108 each coordinate Zn(2+).

It belongs to the HypA/HybF family.

Functionally, involved in the maturation of [NiFe] hydrogenases. Required for nickel insertion into the metal center of the hydrogenase. The sequence is that of Hydrogenase maturation factor HypA from Methanosarcina mazei (strain ATCC BAA-159 / DSM 3647 / Goe1 / Go1 / JCM 11833 / OCM 88) (Methanosarcina frisia).